The chain runs to 1355 residues: DNA-directed RNA polymerase subunit beta' (1355 aa).

Residues cysteine 219, cysteine 293, cysteine 300, and cysteine 303 each contribute to the Zn(2+) site. The interval 1331–1355 is disordered; that stretch reads AEVEVDDEVDDDYEDDDEDDDDYED.

Belongs to the RNA polymerase beta' chain family. RpoC2 subfamily. In cyanobacteria the RNAP catalytic core is composed of 2 alpha, 1 beta, 1 beta', 1 gamma and 1 omega subunit. When a sigma factor is associated with the core the holoenzyme is formed, which can initiate transcription. The cofactor is Zn(2+).

The catalysed reaction is RNA(n) + a ribonucleoside 5'-triphosphate = RNA(n+1) + diphosphate. DNA-dependent RNA polymerase catalyzes the transcription of DNA into RNA using the four ribonucleoside triphosphates as substrates. This Nostoc sp. (strain PCC 7120 / SAG 25.82 / UTEX 2576) protein is DNA-directed RNA polymerase subunit beta'.